The following is a 605-amino-acid chain: LysM domain receptor-like kinase 10 (605 aa).

The signal sequence occupies residues 1 to 20; it reads MFSLPALLIGACAFAAAAVA. The Extracellular segment spans residues 21–245; sequence ASGDGCRAGC…GMGNSLSGGA (225 aa). Intrachain disulfides connect cysteine 26–cysteine 89, cysteine 30–cysteine 161, and cysteine 87–cysteine 159. Asparagine 44 carries an N-linked (GlcNAc...) asparagine glycan. Residues 115–121 and 142–148 each bind chitin; these read GGDTYDA and PPGRIPG. N-linked (GlcNAc...) asparagine glycosylation is found at asparagine 154 and asparagine 158. In terms of domain architecture, LysM spans 174–221; sequence LTYPLWDGETLESVAAQYGFSSPAEMELIRRYNPGMGGVSGKGIVFIP. Asparagine 226 carries N-linked (GlcNAc...) asparagine glycosylation. The helical transmembrane segment at 246 to 266 threads the bilayer; the sequence is IAGIVIACIAIFIVAIWLIIM. At 267 to 605 the chain is on the cytoplasmic side; it reads FYRWQKFRKA…DLRDMDYHPF (339 aa). Serine 278 bears the Phosphoserine mark. The 275-residue stretch at 317 to 591 folds into the Protein kinase domain; it reads FSMEHKIGQG…RSVVVALMAL (275 aa). Residues 323–331 and lysine 344 contribute to the ATP site; that span reads IGQGGFGSV. The active-site Proton acceptor is aspartate 436.

Belongs to the protein kinase superfamily. Ser/Thr protein kinase family.

The protein localises to the cell membrane. It carries out the reaction L-seryl-[protein] + ATP = O-phospho-L-seryl-[protein] + ADP + H(+). The catalysed reaction is L-threonyl-[protein] + ATP = O-phospho-L-threonyl-[protein] + ADP + H(+). The sequence is that of LysM domain receptor-like kinase 10 from Oryza sativa subsp. japonica (Rice).